A 462-amino-acid polypeptide reads, in one-letter code: Argininosuccinate lyase (462 aa).

It belongs to the lyase 1 family. Argininosuccinate lyase subfamily.

The protein localises to the cytoplasm. The enzyme catalyses 2-(N(omega)-L-arginino)succinate = fumarate + L-arginine. It participates in amino-acid biosynthesis; L-arginine biosynthesis; L-arginine from L-ornithine and carbamoyl phosphate: step 3/3. The polypeptide is Argininosuccinate lyase (Lachnoclostridium phytofermentans (strain ATCC 700394 / DSM 18823 / ISDg) (Clostridium phytofermentans)).